Consider the following 156-residue polypeptide: Ribosome maturation factor RimP (156 aa).

This sequence belongs to the RimP family.

The protein resides in the cytoplasm. Functionally, required for maturation of 30S ribosomal subunits. The chain is Ribosome maturation factor RimP from Shouchella clausii (strain KSM-K16) (Alkalihalobacillus clausii).